The chain runs to 241 residues: Uracil-DNA glycosylase (241 aa).

Residue Asp71 is the Proton acceptor of the active site. Positions 221-241 (ISPIDWSLPPRNELDTTSAGA) are disordered.

It belongs to the uracil-DNA glycosylase (UDG) superfamily. UNG family.

It is found in the cytoplasm. It carries out the reaction Hydrolyzes single-stranded DNA or mismatched double-stranded DNA and polynucleotides, releasing free uracil.. In terms of biological role, excises uracil residues from the DNA which can arise as a result of misincorporation of dUMP residues by DNA polymerase or due to deamination of cytosine. The polypeptide is Uracil-DNA glycosylase (Xanthomonas oryzae pv. oryzae (strain MAFF 311018)).